The sequence spans 120 residues: Ribonuclease P protein component (120 aa).

It belongs to the RnpA family. In terms of assembly, consists of a catalytic RNA component (M1 or rnpB) and a protein subunit.

It catalyses the reaction Endonucleolytic cleavage of RNA, removing 5'-extranucleotides from tRNA precursor.. In terms of biological role, RNaseP catalyzes the removal of the 5'-leader sequence from pre-tRNA to produce the mature 5'-terminus. It can also cleave other RNA substrates such as 4.5S RNA. The protein component plays an auxiliary but essential role in vivo by binding to the 5'-leader sequence and broadening the substrate specificity of the ribozyme. In Thioalkalivibrio sulfidiphilus (strain HL-EbGR7), this protein is Ribonuclease P protein component.